The chain runs to 248 residues: 4-hydroxy-tetrahydrodipicolinate reductase (248 aa).

Residues 8 to 13 (GAKGRM), 75 to 77 (GTT), and 99 to 102 (ATNM) contribute to the NAD(+) site. His131 acts as the Proton donor/acceptor in catalysis. His132 lines the (S)-2,3,4,5-tetrahydrodipicolinate pocket. The active-site Proton donor is Lys135. Residue 141–142 (GT) coordinates (S)-2,3,4,5-tetrahydrodipicolinate.

This sequence belongs to the DapB family.

The protein localises to the cytoplasm. The enzyme catalyses (S)-2,3,4,5-tetrahydrodipicolinate + NAD(+) + H2O = (2S,4S)-4-hydroxy-2,3,4,5-tetrahydrodipicolinate + NADH + H(+). It carries out the reaction (S)-2,3,4,5-tetrahydrodipicolinate + NADP(+) + H2O = (2S,4S)-4-hydroxy-2,3,4,5-tetrahydrodipicolinate + NADPH + H(+). It participates in amino-acid biosynthesis; L-lysine biosynthesis via DAP pathway; (S)-tetrahydrodipicolinate from L-aspartate: step 4/4. In terms of biological role, catalyzes the conversion of 4-hydroxy-tetrahydrodipicolinate (HTPA) to tetrahydrodipicolinate. In Campylobacter jejuni subsp. doylei (strain ATCC BAA-1458 / RM4099 / 269.97), this protein is 4-hydroxy-tetrahydrodipicolinate reductase.